Reading from the N-terminus, the 340-residue chain is Sesquiterpene synthase 6 (340 aa).

Mg(2+)-binding residues include D90, N229, S233, and E237. The short motif at 90–94 (DDITD) is the DDXXD motif element. Positions 229-237 (NDIYSFNNE) match the NSE/DTE motif motif. R316 and Y317 together coordinate (2E,6E)-farnesyl diphosphate.

Belongs to the terpene synthase family. Requires Mg(2+) as cofactor.

It catalyses the reaction (2E,6E)-farnesyl diphosphate = delta-cadinene + diphosphate. It carries out the reaction (2E,6E)-farnesyl diphosphate = bicyclogermacrene + diphosphate. In terms of biological role, terpene cyclase that catalyzes the cyclization of farnesyl diphosphate (FPP) to various sesquiterpenes, including bicycloelemene, alpha-gurjunene, 9-epi-caryophylene, bicyclosesquiphellandrene, bicyclogermacrene and delta-cadinene. This Postia placenta (strain ATCC 44394 / Madison 698-R) (Brown rot fungus) protein is Sesquiterpene synthase 6.